The following is a 337-amino-acid chain: MARHHQPRKGSVAFSPRKRAARETPRVKSWPQVDEPGLLALAGYKAGMTHVMMVDNQKNSPTEGMEVSTPVTILEVPPLTVMAVRTYEKTSRGLKTLGEVLATETKDDLRRKLTPPADDYDQEAAIEKIRSNMEYVADVRVIVHTNPRLASVPKKKPEVFECGLGGKTPEEKFEYALEILGKDVRASEIFSEGAFVDAIAVTKGKGFQGPVKRWGIRIQYGKAARSSKGRHIGSLGPWTPSRTMWTVPQAGQMGYHRRTEYNKQILKIGDASEADLVNPDGGFVRYGLVRNDYVMIKGSVPGPTKRLVVLRKAIRAAGKQEEAPQINYISTASKQGV.

Positions 1 to 29 (MARHHQPRKGSVAFSPRKRAARETPRVKS) are disordered.

Belongs to the universal ribosomal protein uL3 family. As to quaternary structure, part of the 50S ribosomal subunit. Forms a cluster with proteins L14 and L24e.

Its function is as follows. One of the primary rRNA binding proteins, it binds directly near the 3'-end of the 23S rRNA, where it nucleates assembly of the 50S subunit. This is Large ribosomal subunit protein uL3 from Methanothermobacter thermautotrophicus (strain ATCC 29096 / DSM 1053 / JCM 10044 / NBRC 100330 / Delta H) (Methanobacterium thermoautotrophicum).